Here is a 369-residue protein sequence, read N- to C-terminus: MSELVEKTSTLLKYLDLDQRGAVIAEYIWVDSAGHLRSKGRTLQRRVESVDELPEWNFDGSSTGQAPGHDSDVYLKPVAFYPDPFRRGDNIIVLAECWNNDGTPNKYNHRHEAAKLFEAHRAADIWFGLEQEYTLFDHNDNVYGWPKGGFPAPQGPYYCGVGAGKVYARDVVEAHYRACLYAGLRISGINAEVMPSQWEFQVGPCTGITMGDELWVGRYLLHRVAEEFGVKVSFHPKPLKGDWNGAGCHTNVSTREMRQPGGMRYIEEAIDKLSKRHKEHIKLYGSDNELRLTGRHETASMATFSSGVANRGASIRIPRSVSKEGFGYFEDRRPASNIDPYLVTGIICETICGAIENADMSKEFERESS.

A GS beta-grasp domain is found at 23–102 (VIAEYIWVDS…VLAECWNNDG (80 aa)). In terms of domain architecture, GS catalytic spans 109 to 369 (HRHEAAKLFE…MSKEFERESS (261 aa)).

It belongs to the glutamine synthetase family. In terms of assembly, homooctamer.

The protein localises to the cytoplasm. It catalyses the reaction L-glutamate + NH4(+) + ATP = L-glutamine + ADP + phosphate + H(+). The sequence is that of Glutamine synthetase (GLN1) from Eremothecium gossypii (strain ATCC 10895 / CBS 109.51 / FGSC 9923 / NRRL Y-1056) (Yeast).